Consider the following 243-residue polypeptide: Venom nerve growth factor 2 (243 aa).

An N-terminal signal peptide occupies residues 1–18 (MSMLCYTLIIAFLIGIWA). Residues 19-125 (APKSEDNVPL…TLNRNIRAKR (107 aa)) constitute a propeptide that is removed on maturation. Basic and acidic residues predominate over residues 47–66 (GLKTSRNTDQRHPAPKKAED). The interval 47–67 (GLKTSRNTDQRHPAPKKAEDQ) is disordered. Intrachain disulfides connect Cys139/Cys204 and Cys192/Cys234. Asn148 carries an N-linked (GlcNAc...) asparagine glycan.

It belongs to the NGF-beta family. In terms of assembly, homodimer; non-covalently linked. Expressed by the venom gland.

The protein localises to the secreted. Functionally, nerve growth factor is important for the development and maintenance of the sympathetic and sensory nervous systems. It stimulates division and differentiation of sympathetic and embryonic sensory neurons as well as basal forebrain cholinergic neurons in the brain. Its relevance in the snake venom is not clear. However, it has been shown to inhibit metalloproteinase-dependent proteolysis of platelet glycoprotein Ib alpha, suggesting a metalloproteinase inhibition to prevent metalloprotease autodigestion and/or protection against prey proteases. Binds a lipid between the two protein chains in the homodimer. The lipid-bound form promotes histamine relase from mouse mast cells, contrary to the lipid-free form. The chain is Venom nerve growth factor 2 from Pseudonaja textilis (Eastern brown snake).